The primary structure comprises 650 residues: XK-related protein 4 (650 aa).

A compositionally biased stretch (basic and acidic residues) spans 1 to 15 (MAAKSDGRLKMKKSS). The segment at 1–44 (MAAKSDGRLKMKKSSDVAFTPLQNSDHSGSVQGLAPGLPSGSGA) is disordered. Residues 21–31 (PLQNSDHSGSV) are compositionally biased toward polar residues. A run of 2 helical transmembrane segments spans residues 114 to 134 (WILA…WLAV) and 144 to 164 (WFGL…VFSF). Ser-200 is subject to Phosphoserine. Positions 200–238 (SAAGEGEARPSTPQRQASNASKSNIAAANSGSNSSGATR) are disordered. Low complexity predominate over residues 216-238 (ASNASKSNIAAANSGSNSSGATR). The next 8 membrane-spanning stretches (helical) occupy residues 248-268 (CSFC…GQIW), 306-326 (HLLA…CIIV), 331-351 (LQAL…WALA), 365-385 (KPIS…TIAA), 396-418 (VFQL…WIVH), 428-448 (WEEI…WFNV), 457-477 (LFIY…LWYL), and 487-507 (FAIP…VFML).

This sequence belongs to the XK family. As to quaternary structure, homodimer; homodimerization takes place upon caspase cleavage. Interacts with the processed C-terminus of XRCC4 (protein XRCC4, C-terminus); interaction promotes the phospholipid scramblase activity. Undergoes proteolytic processing by caspase-3 (CASP3), caspase-6 (CASP6) and caspase-7 (CASP7) to generate the XK-related protein 4, processed form, leading to its activation.

The protein localises to the cell membrane. It carries out the reaction a 1,2-diacyl-sn-glycero-3-phospho-L-serine(in) = a 1,2-diacyl-sn-glycero-3-phospho-L-serine(out). Its activity is regulated as follows. Phospholipid scramblase activity is activated upon caspase cleavage to generate the XK-related protein 4, processed form. Does not act prior the onset of apoptosis. With respect to regulation, homodimerizes upon caspase cleavage. Phospholipid scramblase activity is activated following interaction with the processed C-terminus of XRCC4 (protein XRCC4, C-terminus). Functionally, phospholipid scramblase that promotes phosphatidylserine exposure on apoptotic cell surface. Phosphatidylserine is a specific marker only present at the surface of apoptotic cells and acts as a specific signal for engulfment. In Homo sapiens (Human), this protein is XK-related protein 4.